The sequence spans 261 residues: Ribosomal RNA large subunit methyltransferase E (261 aa).

Positions 81, 83, 104, 120, and 144 each coordinate S-adenosyl-L-methionine. The Proton acceptor role is filled by Lys184. The disordered stretch occupies residues Gly233–Asp261. Residues Pro245–Ala254 show a composition bias toward basic and acidic residues.

The protein belongs to the class I-like SAM-binding methyltransferase superfamily. RNA methyltransferase RlmE family.

It is found in the cytoplasm. It carries out the reaction uridine(2552) in 23S rRNA + S-adenosyl-L-methionine = 2'-O-methyluridine(2552) in 23S rRNA + S-adenosyl-L-homocysteine + H(+). Specifically methylates the uridine in position 2552 of 23S rRNA at the 2'-O position of the ribose in the fully assembled 50S ribosomal subunit. The polypeptide is Ribosomal RNA large subunit methyltransferase E (Allorhizobium ampelinum (strain ATCC BAA-846 / DSM 112012 / S4) (Agrobacterium vitis (strain S4))).